A 249-amino-acid polypeptide reads, in one-letter code: MIT domain-containing protein 1 (249 aa).

The MIT domain occupies glutamine 8 to glycine 86. An important for association with membranes region spans residues arginine 168–arginine 231.

In terms of assembly, homodimer. Interacts (via MIT domain) with CHMP1A, CHMP1B, CHMP2A and IST1.

The protein localises to the late endosome membrane. It localises to the midbody. It is found in the membrane. Functionally, required for efficient abscission at the end of cytokinesis, together with components of the ESCRT-III complex. This Homo sapiens (Human) protein is MIT domain-containing protein 1 (MITD1).